The sequence spans 453 residues: tRNA modification GTPase MnmE (453 aa).

3 residues coordinate (6S)-5-formyl-5,6,7,8-tetrahydrofolate: Arg-22, Glu-79, and Lys-119. The 162-residue stretch at 215–376 (GMKVVIAGRP…LQQHLKSLMG (162 aa)) folds into the TrmE-type G domain. K(+) is bound at residue Asn-225. GTP is bound by residues 225-230 (NAGKSS), 244-250 (TEIAGTT), 269-272 (DTAG), and 334-337 (NKAD). A Mg(2+)-binding site is contributed by Ser-229. K(+)-binding residues include Thr-244, Ile-246, and Thr-249. Residue Thr-250 coordinates Mg(2+). Lys-453 provides a ligand contact to (6S)-5-formyl-5,6,7,8-tetrahydrofolate.

It belongs to the TRAFAC class TrmE-Era-EngA-EngB-Septin-like GTPase superfamily. TrmE GTPase family. As to quaternary structure, homodimer. Heterotetramer of two MnmE and two MnmG subunits. Requires K(+) as cofactor.

The protein localises to the cytoplasm. In terms of biological role, exhibits a very high intrinsic GTPase hydrolysis rate. Involved in the addition of a carboxymethylaminomethyl (cmnm) group at the wobble position (U34) of certain tRNAs, forming tRNA-cmnm(5)s(2)U34. This is tRNA modification GTPase MnmE from Shewanella sediminis (strain HAW-EB3).